The following is a 239-amino-acid chain: 2,3,4,5-tetrahydropyridine-2,6-dicarboxylate N-acetyltransferase (239 aa).

This sequence belongs to the transferase hexapeptide repeat family. DapH subfamily.

It catalyses the reaction (S)-2,3,4,5-tetrahydrodipicolinate + acetyl-CoA + H2O = L-2-acetamido-6-oxoheptanedioate + CoA. It participates in amino-acid biosynthesis; L-lysine biosynthesis via DAP pathway; LL-2,6-diaminopimelate from (S)-tetrahydrodipicolinate (acetylase route): step 1/3. In terms of biological role, catalyzes the transfer of an acetyl group from acetyl-CoA to tetrahydrodipicolinate. This is 2,3,4,5-tetrahydropyridine-2,6-dicarboxylate N-acetyltransferase from Staphylococcus aureus (strain bovine RF122 / ET3-1).